We begin with the raw amino-acid sequence, 362 residues long: MTQITPQPGIMDIALYQGGAAHVDGVSNVTKLSSNENPLGPSPAAVEAMAEAAATMHRYPSSDHATLRAAIAETHGLDAERIICGAGSDEIIAFLCQCYAGPGDEVLYTEHGFAMYRISALAAGATPVEVKERERVTDVDALLAGCTAQTKLVFIANPNNPTGTMISEAEVARLADGIPEDAILVLDGAYAEYVEGFDAGAQLIAARHNVVMTRTFSKIYGLGGARVGWAYGPQEIIDVLNRVRGPFNVSTTALAGAEAAVRDTDYVQRCRLENAKWRGWLADQLAELGVPSDTSCTNFILARFASQSEAESCDDFLKQRGLIVRRVAGYNLPTALRITIGDETACRAVAAAVKDFKAGAAE.

Lys-218 is modified (N6-(pyridoxal phosphate)lysine).

This sequence belongs to the class-II pyridoxal-phosphate-dependent aminotransferase family. Histidinol-phosphate aminotransferase subfamily. As to quaternary structure, homodimer. It depends on pyridoxal 5'-phosphate as a cofactor.

The catalysed reaction is L-histidinol phosphate + 2-oxoglutarate = 3-(imidazol-4-yl)-2-oxopropyl phosphate + L-glutamate. It functions in the pathway amino-acid biosynthesis; L-histidine biosynthesis; L-histidine from 5-phospho-alpha-D-ribose 1-diphosphate: step 7/9. The polypeptide is Histidinol-phosphate aminotransferase (Ruegeria sp. (strain TM1040) (Silicibacter sp.)).